The following is a 127-amino-acid chain: UPF0102 protein SYNAS_23220 (127 aa).

This sequence belongs to the UPF0102 family.

The protein is UPF0102 protein SYNAS_23220 of Syntrophus aciditrophicus (strain SB).